The chain runs to 142 residues: MEPQFPTDLDSYCKYFNISFFDLVLKCIFCKFSVSIVDLASFHNKRLSVIWRDNTPFACCTKCLRLTALYEKDNFFVCTAKSHLLTGLVKKELSDINIRCQHCYSFLDYLEKLYHLYNDVDFLLIRGTWRGVCRNCISHEGR.

Zinc fingers lie at residues 27-63 (CIFCKFSVSIVDLASFHNKRLSVIWRDNTPFACCTKC) and 100-136 (CQHCYSFLDYLEKLYHLYNDVDFLLIRGTWRGVCRNC).

It belongs to the papillomaviridae E6 protein family. In terms of assembly, forms homodimers. Interacts with ubiquitin-protein ligase UBE3A/E6-AP; this interaction stimulates UBE3A ubiquitin activity. Interacts with host BAK1.

Its subcellular location is the host cytoplasm. The protein resides in the host nucleus. Plays a major role in the induction and maintenance of cellular transformation. E6 associates with host UBE3A/E6-AP ubiquitin-protein ligase and modulates its activity. Protects host keratinocytes from apoptosis by mediating the degradation of host BAK1. May also inhibit host immune response. The sequence is that of Protein E6 from Homo sapiens (Human).